Consider the following 369-residue polypeptide: Translocating chain-associated membrane protein 1-like 1 (369 aa).

The Cytoplasmic portion of the chain corresponds to 1-29 (MGLRKKSTKNPPVLSQEFILQNHADIVSC). Residues 30–50 (VGMFFLLGLVFEGTAEASIVF) form a helical membrane-spanning segment. Topologically, residues 51–81 (LTLQHSVAVPAAEEQATGSKSLYYYGVKDLA) are lumenal. Residues 82–102 (TVFFYMLVAIIIHATIQEYVL) form a helical membrane-spanning segment. Residues 103 to 121 (DKINKRMQFTKAKQNKFNE) are Cytoplasmic-facing. Residues 117–326 (NKFNESGQFS…TLWLQRWVED (210 aa)) enclose the TLC domain. The helical transmembrane segment at 122 to 142 (SGQFSVFYFFSCIWGTFILIS) threads the bilayer. The Lumenal segment spans residues 143–164 (ENCLSDPTLIWKARPHSMMTFQ). Residues 165 to 185 (MKFFYISQLAYWFHAFPELYF) form a helical membrane-spanning segment. Over 186–196 (QKTKKQDIPRQ) the chain is Cytoplasmic. Residues 197–215 (LVYIGLHLFHITGAYLLYL) traverse the membrane as a helical segment. Topologically, residues 216-219 (NHLG) are lumenal. The helical transmembrane segment at 220–242 (LLLLVLHYFVELLSHMCGLFYFS) threads the bilayer. Over 243–249 (DEKYQKG) the chain is Cytoplasmic. A helical transmembrane segment spans residues 250 to 270 (ISLWAIVFILGRLVTLIVSVL). Topologically, residues 271 to 297 (TVGFHLAGSQNRNPDALTGNVNVLAAK) are lumenal. A helical membrane pass occupies residues 298-318 (IAVLSSSCTIQAYVTWNLITL). Residues 319 to 369 (WLQRWVEDSNIQASCMKKKRSRSSKKRTENGVGVETSNRVDCPPKRKEKSS) lie on the Cytoplasmic side of the membrane. The interval 335-369 (KKKRSRSSKKRTENGVGVETSNRVDCPPKRKEKSS) is disordered. Basic and acidic residues predominate over residues 360 to 369 (CPPKRKEKSS).

The protein belongs to the TRAM family.

The protein localises to the endoplasmic reticulum membrane. Its function is as follows. Stimulatory or required for the translocation of secretory proteins across the ER membrane. In Homo sapiens (Human), this protein is Translocating chain-associated membrane protein 1-like 1 (TRAM1L1).